The sequence spans 156 residues: SsrA-binding protein (156 aa).

The protein belongs to the SmpB family.

It is found in the cytoplasm. In terms of biological role, required for rescue of stalled ribosomes mediated by trans-translation. Binds to transfer-messenger RNA (tmRNA), required for stable association of tmRNA with ribosomes. tmRNA and SmpB together mimic tRNA shape, replacing the anticodon stem-loop with SmpB. tmRNA is encoded by the ssrA gene; the 2 termini fold to resemble tRNA(Ala) and it encodes a 'tag peptide', a short internal open reading frame. During trans-translation Ala-aminoacylated tmRNA acts like a tRNA, entering the A-site of stalled ribosomes, displacing the stalled mRNA. The ribosome then switches to translate the ORF on the tmRNA; the nascent peptide is terminated with the 'tag peptide' encoded by the tmRNA and targeted for degradation. The ribosome is freed to recommence translation, which seems to be the essential function of trans-translation. The polypeptide is SsrA-binding protein (Desulfitobacterium hafniense (strain DSM 10664 / DCB-2)).